Reading from the N-terminus, the 506-residue chain is Exoglucanase (506 aa).

Residues 1 to 18 (MFPRSILLALSLTAVALG) form the signal peptide. A catalytic region spans residues 19–450 (QQVGTNMAEN…IKFGDINSTF (432 aa)). Residue glutamate 227 is the Nucleophile of the active site. The active-site Proton donor is glutamate 232. N-linked (GlcNAc...) asparagine glycosylation occurs at asparagine 308. The segment at 405–426 (ASPSQPGISRGTCSRDSGKPED) is disordered. A compositionally biased stretch (polar residues) spans 406 to 419 (SPSQPGISRGTCSR). The N-linked (GlcNAc...) asparagine glycan is linked to asparagine 447. The segment at 449–472 (TFNNNGGGGGNPSPTTTRPNSPAQ) is disordered. Residues 451-473 (NNNGGGGGNPSPTTTRPNSPAQT) form a linker region. Residues 460-470 (PSPTTTRPNSP) show a composition bias toward low complexity. Positions 470 to 506 (PAQTMWGQCGGQGWTGPTACQSPSTCHVINDFYSQCF) constitute a CBM1 domain. Intrachain disulfides connect cysteine 478–cysteine 495 and cysteine 489–cysteine 505.

The protein belongs to the glycosyl hydrolase 7 (cellulase C) family.

It carries out the reaction Hydrolysis of (1-&gt;4)-beta-D-glucosidic linkages in cellulose and cellotetraose, releasing cellobiose from the non-reducing ends of the chains.. The biological conversion of cellulose to glucose generally requires three types of hydrolytic enzymes: (1) Endoglucanases which cut internal beta-1,4-glucosidic bonds; (2) Exocellobiohydrolases that cut the disaccharide cellobiose from the non-reducing end of the cellulose polymer chain; (3) Beta-1,4-glucosidases which hydrolyze the cellobiose and other short cello-oligosaccharides to glucose. In Agaricus bisporus (White button mushroom), this protein is Exoglucanase (cel2).